We begin with the raw amino-acid sequence, 419 residues long: MSQDNNFSQGPVPQSARKGVLALTFVMLGLTFFSASMWTGGTLGTGLSYHDFFLAVLIGNLLLGIYTSFLGYIGAKTGLTTHLLARFSFGVKGSWLPSLLLGGTQVGWFGVGVAMFAIPVGKATGLDINLLIAVSGLLMTVTVFFGISALTVLSLIAVPAIACLGGYSVWLAVNGMGGLDALKAVVPAQPLDFNVALALVVGSFISAGTLTADFVRFGRNAKLAVLVAMVAFFLGNSLMFIFGAAGAAALGMADISDVMIAQGLLLPAIVVLGLNIWTTNDNALYASGLGFANITGMSSKTLSVINGIIGTVCALWLYNNFVGWLTFLSAAIPPVGGVIIADYLMNRRRYEHFATTRMMSVNWVAILAVALGIAAGHWLPGIVPVNAVLGGALSYLILNPILNRKTTAAMTHVEANSVE.

The Cytoplasmic segment spans residues 1–19 (MSQDNNFSQGPVPQSARKG). Residues 20-39 (VLALTFVMLGLTFFSASMWT) form a helical membrane-spanning segment. Topologically, residues 40–51 (GGTLGTGLSYHD) are periplasmic. The helical transmembrane segment at 52-71 (FFLAVLIGNLLLGIYTSFLG) threads the bilayer. At 72–100 (YIGAKTGLTTHLLARFSFGVKGSWLPSLL) the chain is on the cytoplasmic side. Residues 101 to 120 (LGGTQVGWFGVGVAMFAIPV) form a helical membrane-spanning segment. Residues 121–127 (GKATGLD) are Periplasmic-facing. The chain crosses the membrane as a helical span at residues 128–147 (INLLIAVSGLLMTVTVFFGI). At 148–152 (SALTV) the chain is on the cytoplasmic side. Residues 153–172 (LSLIAVPAIACLGGYSVWLA) traverse the membrane as a helical segment. Over 173 to 192 (VNGMGGLDALKAVVPAQPLD) the chain is Periplasmic. A helical membrane pass occupies residues 193 to 212 (FNVALALVVGSFISAGTLTA). At 213 to 221 (DFVRFGRNA) the chain is on the cytoplasmic side. A helical membrane pass occupies residues 222 to 242 (KLAVLVAMVAFFLGNSLMFIF). Residues 243–257 (GAAGAAALGMADISD) are Periplasmic-facing. The chain crosses the membrane as a helical span at residues 258–277 (VMIAQGLLLPAIVVLGLNIW). The Cytoplasmic segment spans residues 278–300 (TTNDNALYASGLGFANITGMSSK). A helical membrane pass occupies residues 301–320 (TLSVINGIIGTVCALWLYNN). F321 is a topological domain (periplasmic). The chain crosses the membrane as a helical span at residues 322-341 (VGWLTFLSAAIPPVGGVIIA). Residues 342 to 358 (DYLMNRRRYEHFATTRM) are Cytoplasmic-facing. A helical membrane pass occupies residues 359-378 (MSVNWVAILAVALGIAAGHW). The Periplasmic portion of the chain corresponds to 379 to 380 (LP). The helical transmembrane segment at 381 to 400 (GIVPVNAVLGGALSYLILNP) threads the bilayer. At 401–419 (ILNRKTTAAMTHVEANSVE) the chain is on the cytoplasmic side.

Belongs to the purine-cytosine permease (2.A.39) family.

Its subcellular location is the cell inner membrane. Required for cytosine transport into the cell. This chain is Cytosine permease (codB), found in Escherichia coli O157:H7.